The chain runs to 629 residues: MTNFEQYFDYVKISLASPEKIRQWGERSLPNGQIVGEITKPETINYRTLKPEMDGLFCEKIFGPVKDWECHCGKYKRFRYKGIVCERCGVEVTESRVRRHRMAYIELASPVTHVWYLKGSTSYIALALDLKVKEVEKIVYFHSYVVTQSSEETNLKYKQLLEGYEWKSLEEEIYQNQDENNQIEVGIGAEAIQKLLKDLDLEYIAETLRLEATNPPKSFKTPSLKFNKKMKRLRLIENFIATGADPSWMVFTVIPVIPPDLRPMVQLDGGRFATADLNEFYRRIINRNNRLSRLKSILAPEIIIRNEKRMLQEAVDSLMDNGRRGRTVVGANNRPLKSLSDIIEGKQGRFRQNLLGKRVDYSGRSVIVVGPHLKLHQCGLPREMALELFQPFVIHRLILQGLVNNIKAAKKMIQKNESSIWNVLNEVIQGHPVLLNRAPTLHRLGIQAFEPILVEGRAIKLHPLVCPAFNADFDGDQMAVHVPLSLEAQAEARLLMLAPHNFLSPATGQPIIMPSQDMVLGCYYLTANNPSQQRGASQYFASLEDVVIAYEKKKVDLHAYIWARFDGVIDSDQVKFPIKIETHHDNSVTKFFDNHIIKEDAEHQRIVQYIRTTPGRIIFNKIIQESLVA.

Positions 70, 72, 85, and 88 each coordinate Zn(2+). Mg(2+) is bound by residues aspartate 472, aspartate 474, and aspartate 476.

Belongs to the RNA polymerase beta' chain family. RpoC1 subfamily. In plastids the minimal PEP RNA polymerase catalytic core is composed of four subunits: alpha, beta, beta', and beta''. When a (nuclear-encoded) sigma factor is associated with the core the holoenzyme is formed, which can initiate transcription. It depends on Mg(2+) as a cofactor. Requires Zn(2+) as cofactor.

The protein resides in the plastid. It localises to the chloroplast. The catalysed reaction is RNA(n) + a ribonucleoside 5'-triphosphate = RNA(n+1) + diphosphate. Functionally, DNA-dependent RNA polymerase catalyzes the transcription of DNA into RNA using the four ribonucleoside triphosphates as substrates. This chain is DNA-directed RNA polymerase subunit beta', found in Porphyra purpurea (Red seaweed).